Reading from the N-terminus, the 347-residue chain is Probable dual-specificity RNA methyltransferase RlmN (347 aa).

The Proton acceptor role is filled by E93. The Radical SAM core domain maps to 100–323 (KAKRKTACVS…KKAGLNISTR (224 aa)). A disulfide bond links C107 and C334. Positions 114, 118, and 121 each coordinate [4Fe-4S] cluster. S-adenosyl-L-methionine-binding positions include 160–161 (GE), S192, 215–217 (SLT), and N291. Residue C334 is the S-methylcysteine intermediate of the active site.

Belongs to the radical SAM superfamily. RlmN family. [4Fe-4S] cluster serves as cofactor.

The protein localises to the cytoplasm. It catalyses the reaction adenosine(2503) in 23S rRNA + 2 reduced [2Fe-2S]-[ferredoxin] + 2 S-adenosyl-L-methionine = 2-methyladenosine(2503) in 23S rRNA + 5'-deoxyadenosine + L-methionine + 2 oxidized [2Fe-2S]-[ferredoxin] + S-adenosyl-L-homocysteine. The enzyme catalyses adenosine(37) in tRNA + 2 reduced [2Fe-2S]-[ferredoxin] + 2 S-adenosyl-L-methionine = 2-methyladenosine(37) in tRNA + 5'-deoxyadenosine + L-methionine + 2 oxidized [2Fe-2S]-[ferredoxin] + S-adenosyl-L-homocysteine. Its function is as follows. Specifically methylates position 2 of adenine 2503 in 23S rRNA and position 2 of adenine 37 in tRNAs. The sequence is that of Probable dual-specificity RNA methyltransferase RlmN from Treponema denticola (strain ATCC 35405 / DSM 14222 / CIP 103919 / JCM 8153 / KCTC 15104).